The primary structure comprises 240 residues: Nicotinamide riboside kinase (240 aa).

13–21 is an ATP binding site; it reads GCSSSGKTT. Residues T20 and D39 each coordinate Mg(2+). The active-site Proton acceptor is the D39. Substrate-binding positions include 39-42 and 59-60; these read DDFY and WD. R158 lines the ATP pocket. Residues R159 and 164 to 165 contribute to the substrate site; that span reads GY. ATP contacts are provided by residues 162–164 and 208–210; these read RKG and KSK.

Belongs to the uridine kinase family. NRK subfamily.

It catalyses the reaction beta-nicotinamide D-riboside + ATP = beta-nicotinamide D-ribonucleotide + ADP + H(+). The enzyme catalyses beta-D-ribosylnicotinate + ATP = nicotinate beta-D-ribonucleotide + ADP + H(+). Its pathway is cofactor biosynthesis; NAD(+) biosynthesis. Functionally, catalyzes the phosphorylation of nicotinamide riboside (NR) and nicotinic acid riboside (NaR) to form nicotinamide mononucleotide (NMN) and nicotinic acid mononucleotide (NaMN). This Saccharomyces cerevisiae (strain ATCC 204508 / S288c) (Baker's yeast) protein is Nicotinamide riboside kinase (NRK1).